The primary structure comprises 211 residues: UPF0637 protein BLi01683/BL05149 (211 aa).

It belongs to the UPF0637 family.

This Bacillus licheniformis (strain ATCC 14580 / DSM 13 / JCM 2505 / CCUG 7422 / NBRC 12200 / NCIMB 9375 / NCTC 10341 / NRRL NRS-1264 / Gibson 46) protein is UPF0637 protein BLi01683/BL05149.